The following is a 313-amino-acid chain: Ribosomal protein L11 methyltransferase (313 aa).

Thr-154, Gly-179, Asp-201, and Asn-242 together coordinate S-adenosyl-L-methionine.

It belongs to the methyltransferase superfamily. PrmA family.

The protein localises to the cytoplasm. It carries out the reaction L-lysyl-[protein] + 3 S-adenosyl-L-methionine = N(6),N(6),N(6)-trimethyl-L-lysyl-[protein] + 3 S-adenosyl-L-homocysteine + 3 H(+). In terms of biological role, methylates ribosomal protein L11. This chain is Ribosomal protein L11 methyltransferase, found in Xanthomonas oryzae pv. oryzae (strain MAFF 311018).